A 285-amino-acid polypeptide reads, in one-letter code: MRHTFTTEIMPLPTPEEKNINRLRKSFWEAVEEFDLIEPGDKIMVCLSGGKDSYTMLDMFIHAQTVRKNFEIIAVNLDQKQPDYPEHILPEYLTHLGVNFKIVEKDTYSIVIDKTPAGKTMCSLCSRLRRGSLYATAEELGVTKIALGHHREDVLETFFLNLFFSGKMEAMPAKYRTDDGKHVVIRPLVYCKENEIAEYSIYKKFPIIPCNLCGSQENMQRKITKKMLADWELQYPNRKEVIYNALKNISPSHLFDRDLYDFKELKHRVEELNEKDTPKVEEYIP.

The PP-loop motif signature appears at 48-53 (SGGKDS). [4Fe-4S] cluster contacts are provided by cysteine 122, cysteine 125, and cysteine 213.

Belongs to the TtcA family. In terms of assembly, homodimer. Requires Mg(2+) as cofactor. The cofactor is [4Fe-4S] cluster.

The protein localises to the cytoplasm. The catalysed reaction is cytidine(32) in tRNA + S-sulfanyl-L-cysteinyl-[cysteine desulfurase] + AH2 + ATP = 2-thiocytidine(32) in tRNA + L-cysteinyl-[cysteine desulfurase] + A + AMP + diphosphate + H(+). It functions in the pathway tRNA modification. In terms of biological role, catalyzes the ATP-dependent 2-thiolation of cytidine in position 32 of tRNA, to form 2-thiocytidine (s(2)C32). The sulfur atoms are provided by the cysteine/cysteine desulfurase (IscS) system. The protein is tRNA-cytidine(32) 2-sulfurtransferase of Cytophaga hutchinsonii (strain ATCC 33406 / DSM 1761 / CIP 103989 / NBRC 15051 / NCIMB 9469 / D465).